The chain runs to 106 residues: Diptericin A (106 aa).

The signal sequence occupies residues 1 to 19; that stretch reads MQFTIAVALLCCAIASTLA. The propeptide at 20–23 is removed by a dipeptidylpeptidase; sequence YPMP.

Belongs to the attacin/sarcotoxin-2 family.

The protein resides in the secreted. In terms of biological role, antimicrobial peptide required to resist Gram-negative bacterial infections, regulated by Dredd. This Drosophila melanogaster (Fruit fly) protein is Diptericin A.